The following is a 419-amino-acid chain: tRNA(Ile)-lysidine synthase (419 aa).

25 to 30 provides a ligand contact to ATP; the sequence is SGGIDS.

It belongs to the tRNA(Ile)-lysidine synthase family.

The protein resides in the cytoplasm. The enzyme catalyses cytidine(34) in tRNA(Ile2) + L-lysine + ATP = lysidine(34) in tRNA(Ile2) + AMP + diphosphate + H(+). Ligates lysine onto the cytidine present at position 34 of the AUA codon-specific tRNA(Ile) that contains the anticodon CAU, in an ATP-dependent manner. Cytidine is converted to lysidine, thus changing the amino acid specificity of the tRNA from methionine to isoleucine. The chain is tRNA(Ile)-lysidine synthase from Actinobacillus pleuropneumoniae serotype 7 (strain AP76).